A 336-amino-acid polypeptide reads, in one-letter code: 25S rRNA (uridine(2634)-N(3))-methyltransferase (336 aa).

The disordered stretch occupies residues 286–307; that stretch reads PGYHHRRTNSEQDTTKPAKERD. Basic and acidic residues predominate over residues 293–307; that stretch reads TNSEQDTTKPAKERD.

Belongs to the class I-like SAM-binding methyltransferase superfamily. BMT5 family.

The protein localises to the nucleus. It localises to the nucleolus. The enzyme catalyses uridine(2634) in 25S rRNA + S-adenosyl-L-methionine = N(3)-methyluridine(2634) in 25S rRNA + S-adenosyl-L-homocysteine + H(+). S-adenosyl-L-methionine-dependent methyltransferase that specifically methylates the N(3) position of uridine 2634 (m3U2634) in 25S rRNA. This Saccharomyces cerevisiae (strain ATCC 204508 / S288c) (Baker's yeast) protein is 25S rRNA (uridine(2634)-N(3))-methyltransferase (BMT5).